Reading from the N-terminus, the 489-residue chain is Oxysterol-binding protein-related protein 1B (489 aa).

This sequence belongs to the OSBP family. As to expression, expressed at low levels in flowers.

Its function is as follows. May be involved in the transport of sterols. This is Oxysterol-binding protein-related protein 1B (ORP1B) from Arabidopsis thaliana (Mouse-ear cress).